The following is a 426-amino-acid chain: Growth-regulating factor 9 (426 aa).

The QLQ domain maps to 92 to 127 (PFTPSQWMELEHQALIYKYLNAKAPIPSSLLISISK). The 45-residue stretch at 151–195 (DPEPGRCRRTDGKKWRCSKEAMADHKYCERHINRNRHRSRKPVEN) folds into the WRC domain. Short sequence motifs (bipartite nuclear localization signal) lie at residues 156-166 (RCRRTDGKKWR) and 184-191 (RNRHRSRK). The segment at 184 to 222 (RNRHRSRKPVENQSRKTVKETPCAGSLPSSVGQGSFKKA) is disordered. Residues 191-202 (KPVENQSRKTVK) show a composition bias toward basic and acidic residues.

Belongs to the GRF family.

It is found in the nucleus. Functionally, transcription activator that plays a regulatory role in gibberellin-induced stem elongation. This Oryza sativa subsp. japonica (Rice) protein is Growth-regulating factor 9 (GRF9).